The sequence spans 629 residues: Iron-regulated surface determinant protein B (629 aa).

The N-terminal stretch at 1–40 is a signal peptide; that stretch reads MNKQQKEFKSFYSIRKSSLGVASVAISTLLLLMSNGEAQA. Positions 12–23 match the YSIRK-G/S signaling motif motif; the sequence is YSIRKSSLGVAS. The disordered stretch occupies residues 38–104; the sequence is AQAAEETGGT…VKPAAKSDNN (67 aa). A compositionally biased stretch (basic and acidic residues) spans 83–99; it reads KEVEAPTSETKEVKPAA. NEAT domains are found at residues 128–253 and 325–442; these read SAPN…KFKT and KMTD…TKAN. 2 residues coordinate heme: Met-346 and Tyr-424. 2 stretches are compositionally biased toward basic and acidic residues: residues 443–460 and 473–518; these read ADKT…KKET and VEKE…KGEV. The segment at 443–605 is disordered; that stretch reads ADKTNKKEQQ…QTGEESNKDM (163 aa). Low complexity predominate over residues 519-532; it reads ESSSTTPTKVVSTT. Composition is skewed to polar residues over residues 533-556 and 569-599; these read QNAA…SAGS and NIKN…QTGE. An LPXTG sorting signal motif is present at residues 594-598; sequence LPQTG. The residue at position 597 (Thr-597) is a Pentaglycyl murein peptidoglycan amidated threonine. Residues 598–629 constitute a propeptide, removed by sortase A; sequence GEESNKDMTLPLMSLLALSSIIAFVLPRKRKN.

It belongs to the IsdB family. Interacts with host HBA; this interaction allows heme extraction as iron source. Interacts with IsdA.

The protein localises to the secreted. Its subcellular location is the cell wall. Its function is as follows. Cell wall-anchored surface receptor that extracts heme from oxidized metHb to enable growth on hemoglobin as a sole iron source. Rapidly extracts heme from hemoglobin and transfers it to IsdA or IsdC, which then relays it to the membrane transporter/IsdEF for internalization. Also promotes resistance to hydrogen peroxide and killing by neutrophils. In Staphylococcus aureus (strain bovine RF122 / ET3-1), this protein is Iron-regulated surface determinant protein B (isdB).